The primary structure comprises 345 residues: Dihydroorotase (345 aa).

Residues histidine 13 and histidine 15 each contribute to the Zn(2+) site. Substrate is bound by residues 15–17 (HFR) and asparagine 41. Positions 98, 135, and 173 each coordinate Zn(2+). Lysine 98 is subject to N6-carboxylysine. Position 135 (histidine 135) interacts with substrate. Leucine 218 contacts substrate. Aspartate 246 contacts Zn(2+). Aspartate 246 is a catalytic residue. 2 residues coordinate substrate: histidine 250 and alanine 262.

This sequence belongs to the metallo-dependent hydrolases superfamily. DHOase family. Class II DHOase subfamily. In terms of assembly, homodimer. Requires Zn(2+) as cofactor.

It carries out the reaction (S)-dihydroorotate + H2O = N-carbamoyl-L-aspartate + H(+). The protein operates within pyrimidine metabolism; UMP biosynthesis via de novo pathway; (S)-dihydroorotate from bicarbonate: step 3/3. Its function is as follows. Catalyzes the reversible cyclization of carbamoyl aspartate to dihydroorotate. The polypeptide is Dihydroorotase (Shewanella halifaxensis (strain HAW-EB4)).